A 442-amino-acid chain; its full sequence is Coiled-coil domain-containing protein 91 (442 aa).

Residues 1–16 (MDDDDFGGFEAAETFD) are GGA1-binding motif. A disordered region spans residues 1-27 (MDDDDFGGFEAAETFDGEQGGNQAVSP). Phosphoserine occurs at positions 43 and 46. The disordered stretch occupies residues 48–79 (ELILDHDRSSPSSGHLRSDAVISSPDDTRADS). 2 coiled-coil regions span residues 127–213 (GVHV…ALSI) and 248–409 (CEEL…RLDQ). Residues 211 to 414 (LSIIVDEYKA…RRLDQVTRQR (204 aa)) form a homodimerization region.

As to quaternary structure, homodimer. Interacts with GGA1, GGA2 and AP1G1.

It is found in the membrane. It localises to the golgi apparatus. The protein localises to the trans-Golgi network membrane. The protein resides in the trans-Golgi network. Involved in the regulation of membrane traffic through the trans-Golgi network (TGN). Functions in close cooperation with the GGAs in the sorting of hydrolases to lysosomes. The chain is Coiled-coil domain-containing protein 91 (Ccdc91) from Rattus norvegicus (Rat).